Consider the following 235-residue polypeptide: Exosome complex component RRP46 (235 aa).

The segment covering 1 to 13 (MEEETHTDAKIRA) has biased composition (basic and acidic residues). The tract at residues 1–24 (MEEETHTDAKIRAENGTGSSPRGP) is disordered. A Phosphoserine modification is found at serine 20.

Belongs to the RNase PH family. Homodimer. Component of the RNA exosome core complex (Exo-9), composed of EXOSC1, EXOSC2, EXOSC3, EXOSC4, EXOSC5, EXOSC6, EXOSC7, EXOSC8 and EXOSC9; within the complex interacts with EXOSC3, EXOSC8, and EXOSC9. The catalytically inactive RNA exosome core complex (Exo-9) associates with the catalytic subunit EXOSC10/RRP6. Exo-9 may associate with DIS3 to form the nucleolar exosome complex, or DIS3L to form the cytoplasmic exosome complex. Exo-9 is formed by a hexameric base ring consisting of the heterodimers EXOSC4-EXOSC9, EXOSC5-EXOSC8 and EXOSC6-EXOSC7, and a cap ring consisting of EXOSC1, EXOSC2 and EXOSC3. The RNA exosome complex associates with cofactors C1D/RRP47, MPHOSPH6/MPP6 and MTREX/MTR4. Interacts with GTPBP1. Interacts with ZC3HAV1. Interacts with DDX17 only in the presence of ZC3HAV1 in an RNA-independent manner. As to expression, highly expressed in a variety of hematopoietic and epithelial tumor cell lines, but not in normal hematopoietic tissues or other normal tissue, with the exception of testis.

It is found in the nucleus. It localises to the nucleolus. Its subcellular location is the cytoplasm. Functionally, non-catalytic component of the RNA exosome complex which has 3'-&gt;5' exoribonuclease activity and participates in a multitude of cellular RNA processing and degradation events. In the nucleus, the RNA exosome complex is involved in proper maturation of stable RNA species such as rRNA, snRNA and snoRNA, in the elimination of RNA processing by-products and non-coding 'pervasive' transcripts, such as antisense RNA species and promoter-upstream transcripts (PROMPTs), and of mRNAs with processing defects, thereby limiting or excluding their export to the cytoplasm. The RNA exosome may be involved in Ig class switch recombination (CSR) and/or Ig variable region somatic hypermutation (SHM) by targeting AICDA deamination activity to transcribed dsDNA substrates. In the cytoplasm, the RNA exosome complex is involved in general mRNA turnover and specifically degrades inherently unstable mRNAs containing AU-rich elements (AREs) within their 3' untranslated regions, and in RNA surveillance pathways, preventing translation of aberrant mRNAs. It seems to be involved in degradation of histone mRNA. The catalytic inactive RNA exosome core complex of 9 subunits (Exo-9) is proposed to play a pivotal role in the binding and presentation of RNA for ribonucleolysis, and to serve as a scaffold for the association with catalytic subunits and accessory proteins or complexes. In vitro, EXOSC5 does not bind or digest single-stranded RNA and binds to double-stranded DNA without detectable DNase activity. The chain is Exosome complex component RRP46 (EXOSC5) from Homo sapiens (Human).